Reading from the N-terminus, the 544-residue chain is Serine/threonine-protein kinase PAK 3 (544 aa).

The segment at 1 to 73 (MSDSLDNEEK…EKERPEISLP (73 aa)) is disordered. S2 and S4 each carry phosphoserine. Polar residues predominate over residues 18-32 (MNSNNRDSSALNHSS). Residue S50 is modified to Phosphoserine; by autocatalysis. Residues 63 to 73 (KEKERPEISLP) show a composition bias toward basic and acidic residues. The segment at 65–108 (KERPEISLPSDFEHTIHVGFDAVTGEFTGIPEQWARLLQTSNIT) is GTPase-binding. The autoregulatory region stretch occupies residues 65-135 (KERPEISLPS…YDSKETVNNQ (71 aa)). The CRIB domain occupies 70-83 (ISLPSDFEHTIHVG). Residues 84 to 267 (FDAVTGEFTG…IVSVGDPKKK (184 aa)) form a linker region. S139 bears the Phosphoserine; by autocatalysis mark. Disordered regions lie at residues 156-197 (SNTK…RPEH) and 213-248 (PAAP…KMTD). Position 171 is a phosphoserine (S171). The span at 171–186 (SEEEDEEEEEEEDDNE) shows a compositional bias: acidic residues. Residues 224-235 (SAENANSSTLYR) show a composition bias toward polar residues. Residues 268–519 (YTRFEKIGQG…AKELLQHPFL (252 aa)) enclose the Protein kinase domain. Residues 274-282 (IGQGASGTV) and K297 contribute to the ATP site. The active-site Proton acceptor is the D387. T421 carries the post-translational modification Phosphothreonine; by autocatalysis.

The protein belongs to the protein kinase superfamily. STE Ser/Thr protein kinase family. STE20 subfamily. In terms of assembly, interacts tightly with GTP-bound but not GDP-bound CDC42/p21 and RAC1. Shows highly specific binding to the SH3 domains of phospholipase C-gamma and of adapter protein NCK. Interacts with the C-terminal of APP. Interacts with ARHGEF6 and ARHGEF7. Interacts with GIT1 and GIT2. Mg(2+) is required as a cofactor. Post-translationally, autophosphorylated when activated by CDC42/p21. In terms of processing, neddylated. As to expression, detected at high levels in the brain and at low levels in the testis.

The protein resides in the cytoplasm. It carries out the reaction L-seryl-[protein] + ATP = O-phospho-L-seryl-[protein] + ADP + H(+). The enzyme catalyses L-threonyl-[protein] + ATP = O-phospho-L-threonyl-[protein] + ADP + H(+). Activated by binding small G proteins. Binding of GTP-bound CDC42 or RAC1 to the autoregulatory region releases monomers from the autoinhibited dimer, enables phosphorylation of Thr-421 and allows the kinase domain to adopt an active structure. In terms of biological role, serine/threonine protein kinase that plays a role in a variety of different signaling pathways including cytoskeleton regulation, cell migration, or cell cycle regulation. Plays a role in dendrite spine morphogenesis as well as synapse formation and plasticity. Acts as a downstream effector of the small GTPases CDC42 and RAC1. Activation by the binding of active CDC42 and RAC1 results in a conformational change and a subsequent autophosphorylation on several serine and/or threonine residues. Phosphorylates MAPK4 and MAPK6 and activates the downstream target MAPKAPK5, a regulator of F-actin polymerization and cell migration. Additionally, phosphorylates TNNI3/troponin I to modulate calcium sensitivity and relaxation kinetics of thin myofilaments. May also be involved in early neuronal development. In hippocampal neurons, necessary for the formation of dendritic spines and excitatory synapses; this function is dependent on kinase activity and may be exerted by the regulation of actomyosin contractility through the phosphorylation of myosin II regulatory light chain (MLC). This chain is Serine/threonine-protein kinase PAK 3 (Pak3), found in Rattus norvegicus (Rat).